An 827-amino-acid polypeptide reads, in one-letter code: MMGRRGSSWCRWWVALLVLAVAADAVGCTSVSYDDRSLVIDGQRRIILSGSIHYPRSTPEMWPDLIKKAKEGGLDAIETYIFWNGHEPHRRQYNFEGNYDVVRFFKEIQNAGMYAILRIGPYICGEWNYGGLPAWLRDIPGMQFRLHNEPFENEMETFTTLIVNKMKDSKMFAEQGGPIILAQIENEYGNIMGKLNNNQSASEYIHWCADMANKQNVGVPWIMCQQDDDVPHNVVNTCNGFYCHDWFPNRTGIPKIWTENWTGWFKAWDKPDFHRSAEDIAFAVAMFFQKRGSLQNYYMYHGGTNFGRTSGGPYITTSYDYDAPLDEYGNLRQPKYGHLKELHSVLKSMEKTLVHGEYFDTNYGDNITVTKYTLDSSSACFINNRFDDKDVNVTLDGATHLLPAWSVSILPDCKTVAFNSAKIKTQTSVMVKKPNTAEQEQESLKWSWMPENLSPFMTDEKGNFRKNELLEQIVTSTDQSDYLWYRTSLNHKGEGSYKLYVNTTGHELYAFVNGKLIGKNHSADGDFVFQLESPVKLHDGKNYISLLSATVGLKNYGPSFEKMPTGIVGGPVKLIDSNGTAIDLSNSSWSYKAGLASEYRQIHLDKPGYKWNGNNGTIPINRPFTWYKATFEAPSGEDAVVVDLLGLNKGVAWVNGNNLGRYWPSYTAAEMAGCHRCDYRGAFQAEGDGTRCLTGCGEPSQRYYHVPRSFLAAGEPNTLLLFEEAGGDPSGVALRTVVPGAVCTSGEAGDAVTLSCGGGHAVSSVDVASFGVGRGRCGGYEGGCESKAAYEAFTAACVGKESCTVEITGAFAGAGCLSGVLTVQATC.

The signal sequence occupies residues 1–25; the sequence is MMGRRGSSWCRWWVALLVLAVAADA. E187 serves as the catalytic Proton donor. N-linked (GlcNAc...) asparagine glycans are attached at residues N198 and N249. E259 (nucleophile) is an active-site residue. Residues N260, N366, N392, N502, N520, N578, N586, and N615 are each glycosylated (N-linked (GlcNAc...) asparagine). Residues 746–827 form the SUEL-type lectin domain; the sequence is GEAGDAVTLS…SGVLTVQATC (82 aa).

Belongs to the glycosyl hydrolase 35 family.

The protein resides in the secreted. The protein localises to the extracellular space. It is found in the apoplast. The enzyme catalyses Hydrolysis of terminal non-reducing beta-D-galactose residues in beta-D-galactosides.. The chain is Beta-galactosidase 1 from Oryza sativa subsp. japonica (Rice).